Consider the following 98-residue polypeptide: MSVSIKPLEDRIVVKTLEAEQTTASGLVIPDTAKEKPQEGEVLAIGPGRVDDNGNRVPVDVAVGDVVIYSKYGGTEVKYAGQEYLILSARDVLAVVQK.

It belongs to the GroES chaperonin family. Heptamer of 7 subunits arranged in a ring. Interacts with the chaperonin GroEL.

The protein resides in the cytoplasm. Functionally, together with the chaperonin GroEL, plays an essential role in assisting protein folding. The GroEL-GroES system forms a nano-cage that allows encapsulation of the non-native substrate proteins and provides a physical environment optimized to promote and accelerate protein folding. GroES binds to the apical surface of the GroEL ring, thereby capping the opening of the GroEL channel. This Beutenbergia cavernae (strain ATCC BAA-8 / DSM 12333 / CCUG 43141 / JCM 11478 / NBRC 16432 / NCIMB 13614 / HKI 0122) protein is Co-chaperonin GroES.